The sequence spans 183 residues: ATP synthase subunit delta (183 aa).

Belongs to the ATPase delta chain family. F-type ATPases have 2 components, F(1) - the catalytic core - and F(0) - the membrane proton channel. F(1) has five subunits: alpha(3), beta(3), gamma(1), delta(1), epsilon(1). F(0) has three main subunits: a(1), b(2) and c(10-14). The alpha and beta chains form an alternating ring which encloses part of the gamma chain. F(1) is attached to F(0) by a central stalk formed by the gamma and epsilon chains, while a peripheral stalk is formed by the delta and b chains.

It is found in the cell inner membrane. Its function is as follows. F(1)F(0) ATP synthase produces ATP from ADP in the presence of a proton or sodium gradient. F-type ATPases consist of two structural domains, F(1) containing the extramembraneous catalytic core and F(0) containing the membrane proton channel, linked together by a central stalk and a peripheral stalk. During catalysis, ATP synthesis in the catalytic domain of F(1) is coupled via a rotary mechanism of the central stalk subunits to proton translocation. This protein is part of the stalk that links CF(0) to CF(1). It either transmits conformational changes from CF(0) to CF(1) or is implicated in proton conduction. This is ATP synthase subunit delta from Desulforapulum autotrophicum (strain ATCC 43914 / DSM 3382 / VKM B-1955 / HRM2) (Desulfobacterium autotrophicum).